Consider the following 558-residue polypeptide: Phosphatidylserine lipase ABHD16A (558 aa).

2 helical membrane-spanning segments follow: residues 60 to 80 (ILAL…FAFF) and 93 to 113 (VVPF…VACL). The Cytoplasmic segment spans residues 114–558 (RGIGRWTNPQ…AQNFQMPWHL (445 aa)). In terms of domain architecture, AB hydrolase-1 spans 281–407 (LVICCEGNAG…LVTRTVRQHL (127 aa)). Active-site charge relay system residues include S355, D430, and H507.

Belongs to the AB hydrolase superfamily. ABHD16 family.

It is found in the membrane. It carries out the reaction 1-heptadecanoyl-2-(5Z,8Z,11Z,14Z-eicosatetraenoyl)-sn-glycero-3-phosphoserine + H2O = 1-heptadecanoyl-sn-glycero-3-phosphoserine + (5Z,8Z,11Z,14Z)-eicosatetraenoate + H(+). It catalyses the reaction 1-hexadecanoyl-2-(9Z-octadecenoyl)-sn-glycero-3-phospho-L-serine + H2O = 1-hexadecanoyl-sn-glycero-3-phospho-L-serine + (9Z)-octadecenoate + H(+). The catalysed reaction is 1-octadecanoyl-2-(9Z,12Z-octadecadienoyl)-sn-glycero-3-phosphoserine + H2O = 1-octadecanoyl-sn-glycero-3-phosphoserine + (9Z,12Z)-octadecadienoate + H(+). The enzyme catalyses 1-heptadecanoyl-2-(5Z,8Z,11Z,14Z-eicosatetraenoyl)-sn-glycero-3-phosphocholine + H2O = 1-heptadecanoyl-sn-glycero-3-phosphocholine + (5Z,8Z,11Z,14Z)-eicosatetraenoate + H(+). It carries out the reaction 1-hexadecanoyl-2-(9Z-octadecenoyl)-sn-glycero-3-phosphoglycerol + H2O = 1-hexadecanoyl-sn-glycero-3-phosphoglycerol + (9Z)-octadecenoate + H(+). It catalyses the reaction 1-hexadecanoyl-2-(9Z-octadecenoyl)-sn-glycero-3-phospho-(1D-myo-inositol) + H2O = 1-hexadecanoyl-sn-glycero-3-phospho-(1D-myo-inositol) + (9Z)-octadecenoate + H(+). The catalysed reaction is 1-heptadecanoyl-2-(5Z,8Z,11Z,14Z-eicosatetraenoyl)-sn-glycero-3-phosphoethanolamine + H2O = 1-heptadecanoyl-sn-glycero-3-phosphoethanolamine + (5Z,8Z,11Z,14Z)-eicosatetraenoate + H(+). The enzyme catalyses 1-hexadecanoyl-2-(9Z-octadecenoyl)-sn-glycero-3-phospho-(1'-sn-glycerol) + H2O = 1-hexadecanoyl-sn-glycero-3-phospho-(1'-sn-glycerol) + (9Z)-octadecenoate + H(+). It carries out the reaction Hydrolyzes glycerol monoesters of long-chain fatty acids.. It catalyses the reaction 1-tetradecanoylglycerol + H2O = tetradecanoate + glycerol + H(+). The catalysed reaction is 2-hexadecanoylglycerol + H2O = glycerol + hexadecanoate + H(+). The enzyme catalyses 1-(9Z-octadecenoyl)-glycerol + H2O = glycerol + (9Z)-octadecenoate + H(+). It carries out the reaction 2-(9Z-octadecenoyl)-glycerol + H2O = glycerol + (9Z)-octadecenoate + H(+). It catalyses the reaction 2-(9Z,12Z-octadecadienoyl)-glycerol + H2O = (9Z,12Z)-octadecadienoate + glycerol + H(+). The catalysed reaction is 1-(5Z,8Z,11Z,14Z-eicosatetraenoyl)-glycerol + H2O = glycerol + (5Z,8Z,11Z,14Z)-eicosatetraenoate + H(+). The enzyme catalyses 2-(5Z,8Z,11Z,14Z-eicosatetraenoyl)-glycerol + H2O = glycerol + (5Z,8Z,11Z,14Z)-eicosatetraenoate + H(+). It carries out the reaction prostaglandin D2-1-glycerol ester + H2O = prostaglandin D2 + glycerol + H(+). It catalyses the reaction 2-glyceryl-15-deoxy-Delta(12,14)-prostaglandin J2 + H2O = 15-deoxy-Delta(12,14)-prostaglandin J2 + glycerol + H(+). The catalysed reaction is 1-(9Z,12Z-octadecadienoyl)-glycerol + H2O = (9Z,12Z)-octadecadienoate + glycerol + H(+). In terms of biological role, phosphatidylserine (PS) lipase that mediates the hydrolysis of phosphatidylserine to generate lysophosphatidylserine (LPS). LPS constitutes a class of signaling lipids that regulates immunological and neurological processes. Has no activity towards diacylglycerol, triacylglycerol or lysophosphatidylserine lipase. Also has monoacylglycerol lipase activity, with preference for 1-(9Z,12Z-octadecadienoyl)-glycerol (1-LG) and 2-glyceryl-15-deoxy-Delta(12,14)-prostaglandin J2 (15d-PGJ(2)-G). This is Phosphatidylserine lipase ABHD16A from Bos taurus (Bovine).